The sequence spans 183 residues: Large ribosomal subunit protein bL32m (183 aa).

Zn(2+) contacts are provided by C99, C102, C112, and C115.

Belongs to the bacterial ribosomal protein bL32 family. Component of the mitochondrial large ribosomal subunit (mt-LSU).

The protein localises to the mitochondrion. Its function is as follows. Component of the mitochondrial large ribosomal subunit (mt-LSU). The mitochondrial ribosome (mitoribosome) is a large ribonucleoprotein complex responsible for the synthesis of proteins inside mitochondria. This is Large ribosomal subunit protein bL32m (mrpl-32) from Caenorhabditis elegans.